Reading from the N-terminus, the 476-residue chain is Adenosylhomocysteinase (476 aa).

Substrate is bound by residues Thr67, Asp142, and Glu202. NAD(+) is bound at residue 203 to 205 (TTT). Residues Lys232 and Asp236 each coordinate substrate. Residues Asn237, 266–271 (GYGDVG), Glu289, Asn324, 345–347 (IGH), and Asn390 contribute to the NAD(+) site.

Belongs to the adenosylhomocysteinase family. Requires NAD(+) as cofactor.

It localises to the cytoplasm. The enzyme catalyses S-adenosyl-L-homocysteine + H2O = L-homocysteine + adenosine. It functions in the pathway amino-acid biosynthesis; L-homocysteine biosynthesis; L-homocysteine from S-adenosyl-L-homocysteine: step 1/1. May play a key role in the regulation of the intracellular concentration of adenosylhomocysteine. The protein is Adenosylhomocysteinase of Synechococcus sp. (strain WH7803).